We begin with the raw amino-acid sequence, 205 residues long: Thymidylate kinase (205 aa).

7–14 (GIDGSGKT) contacts ATP.

Belongs to the thymidylate kinase family.

The catalysed reaction is dTMP + ATP = dTDP + ADP. Functionally, phosphorylation of dTMP to form dTDP in both de novo and salvage pathways of dTTP synthesis. The sequence is that of Thymidylate kinase from Wolbachia pipientis subsp. Culex pipiens (strain wPip).